The primary structure comprises 299 residues: Methionine aminopeptidase (299 aa).

His-64 lines the substrate pocket. Positions 84, 95, and 158 each coordinate a divalent metal cation. Substrate is bound at residue His-166. The a divalent metal cation site is built by Glu-191 and Glu-284.

This sequence belongs to the peptidase M24A family. Methionine aminopeptidase archaeal type 2 subfamily. In terms of assembly, monomer. It depends on Co(2+) as a cofactor. The cofactor is Zn(2+). Mn(2+) serves as cofactor. Fe(2+) is required as a cofactor.

It carries out the reaction Release of N-terminal amino acids, preferentially methionine, from peptides and arylamides.. In terms of biological role, removes the N-terminal methionine from nascent proteins. The N-terminal methionine is often cleaved when the second residue in the primary sequence is small and uncharged (Met-Ala-, Cys, Gly, Pro, Ser, Thr, or Val). The protein is Methionine aminopeptidase of Methanothermobacter thermautotrophicus (strain ATCC 29096 / DSM 1053 / JCM 10044 / NBRC 100330 / Delta H) (Methanobacterium thermoautotrophicum).